The sequence spans 638 residues: Threonine--tRNA ligase (638 aa).

Positions 1 to 61 constitute a TGS domain; the sequence is MPIITLPDGS…NKDSKVVIIT (61 aa). The segment at 242 to 533 is catalytic; the sequence is DHRKLGKKHS…LIEQYEAKFP (292 aa). Cys333, His384, and His510 together coordinate Zn(2+).

Belongs to the class-II aminoacyl-tRNA synthetase family. In terms of assembly, homodimer. The cofactor is Zn(2+).

The protein localises to the cytoplasm. The catalysed reaction is tRNA(Thr) + L-threonine + ATP = L-threonyl-tRNA(Thr) + AMP + diphosphate + H(+). Its function is as follows. Catalyzes the attachment of threonine to tRNA(Thr) in a two-step reaction: L-threonine is first activated by ATP to form Thr-AMP and then transferred to the acceptor end of tRNA(Thr). Also edits incorrectly charged L-seryl-tRNA(Thr). This chain is Threonine--tRNA ligase, found in Prochlorococcus marinus (strain MIT 9301).